The chain runs to 220 residues: Fructose-6-phosphate aldolase 1 (220 aa).

Catalysis depends on Lys85, which acts as the Schiff-base intermediate with substrate.

Belongs to the transaldolase family. Type 3A subfamily. In terms of assembly, homodecamer.

The protein localises to the cytoplasm. The enzyme catalyses beta-D-fructose 6-phosphate = dihydroxyacetone + D-glyceraldehyde 3-phosphate. In terms of biological role, catalyzes the reversible formation of fructose 6-phosphate from dihydroxyacetone and D-glyceraldehyde 3-phosphate via an aldolization reaction. This chain is Fructose-6-phosphate aldolase 1 (fsaA), found in Escherichia coli O157:H7.